Consider the following 257-residue polypeptide: Thiazole synthase (257 aa).

K100 serves as the catalytic Schiff-base intermediate with DXP. 1-deoxy-D-xylulose 5-phosphate-binding positions include G161, 187–188, and 209–210; these read AG and NT.

This sequence belongs to the ThiG family. In terms of assembly, homotetramer. Forms heterodimers with either ThiH or ThiS.

The protein localises to the cytoplasm. It carries out the reaction [ThiS sulfur-carrier protein]-C-terminal-Gly-aminoethanethioate + 2-iminoacetate + 1-deoxy-D-xylulose 5-phosphate = [ThiS sulfur-carrier protein]-C-terminal Gly-Gly + 2-[(2R,5Z)-2-carboxy-4-methylthiazol-5(2H)-ylidene]ethyl phosphate + 2 H2O + H(+). It functions in the pathway cofactor biosynthesis; thiamine diphosphate biosynthesis. Its function is as follows. Catalyzes the rearrangement of 1-deoxy-D-xylulose 5-phosphate (DXP) to produce the thiazole phosphate moiety of thiamine. Sulfur is provided by the thiocarboxylate moiety of the carrier protein ThiS. In vitro, sulfur can be provided by H(2)S. In Zymomonas mobilis subsp. mobilis (strain ATCC 31821 / ZM4 / CP4), this protein is Thiazole synthase.